The primary structure comprises 234 residues: RNA-binding protein pno1 (234 aa).

The interval 1 to 39 (MPTQDSAAKQADDGFQLVQKKSRKRKMTMDMDDADPKAG) is disordered. Residues 158 to 207 (LARCIGRLAGKGGRTKFTIENVTKTRIVLADSKVHILGSYQNIRAARTAL) enclose the KH domain.

This sequence belongs to the PNO1 family.

Its subcellular location is the nucleus. The protein resides in the nucleolus. This Ixodes scapularis (Black-legged tick) protein is RNA-binding protein pno1.